Consider the following 1186-residue polypeptide: ATP-dependent helicase/deoxyribonuclease subunit B (1186 aa).

The 308-residue stretch at 1-308 folds into the UvrD-like helicase ATP-binding domain; the sequence is MSVKFLLGRA…AHLEKEWGKN (308 aa). 8-15 contacts ATP; it reads GRAGSGKT. A UvrD-like helicase C-terminal domain is found at 288 to 620; it reads SLPRFKDNPA…LVGTADRSRY (333 aa). [4Fe-4S] cluster contacts are provided by Cys822, Cys1144, Cys1147, and Cys1153.

The protein belongs to the helicase family. AddB/RexB type 1 subfamily. In terms of assembly, heterodimer of AddA and AddB. The cofactor is Mg(2+). It depends on [4Fe-4S] cluster as a cofactor.

The heterodimer acts as both an ATP-dependent DNA helicase and an ATP-dependent, dual-direction single-stranded exonuclease. Recognizes the chi site generating a DNA molecule suitable for the initiation of homologous recombination. The AddB subunit has 5' -&gt; 3' nuclease activity but not helicase activity. This chain is ATP-dependent helicase/deoxyribonuclease subunit B, found in Natranaerobius thermophilus (strain ATCC BAA-1301 / DSM 18059 / JW/NM-WN-LF).